We begin with the raw amino-acid sequence, 154 residues long: MGLSDDEWNHVLGIWAKVEPDLTAHGQEVIIRLFQLHPETQERFAKFKNLTTIDALKSSEEVKKHGTTVLTALGRILKQKNNHEQELKPLAESHATKHKIPVKYLEFICEIIVKVIAEKHPSDFGADSQAAMKKALELFRNDMASKYKEFGFLG.

A Globin domain is found at 2-148 (GLSDDEWNHV…FRNDMASKYK (147 aa)). Nitrite is bound at residue His65. His65 is a binding site for O2. Heme b is bound at residue His94.

Belongs to the globin family. As to quaternary structure, monomeric.

The protein resides in the cytoplasm. Its subcellular location is the sarcoplasm. It carries out the reaction Fe(III)-heme b-[protein] + nitric oxide + H2O = Fe(II)-heme b-[protein] + nitrite + 2 H(+). The catalysed reaction is H2O2 + AH2 = A + 2 H2O. In terms of biological role, monomeric heme protein which primary function is to store oxygen and facilitate its diffusion within muscle tissues. Reversibly binds oxygen through a pentacoordinated heme iron and enables its timely and efficient release as needed during periods of heightened demand. Depending on the oxidative conditions of tissues and cells, and in addition to its ability to bind oxygen, it also has a nitrite reductase activity whereby it regulates the production of bioactive nitric oxide. Under stress conditions, like hypoxia and anoxia, it also protects cells against reactive oxygen species thanks to its pseudoperoxidase activity. The chain is Myoglobin (MB) from Chelonia mydas (Green sea-turtle).